Reading from the N-terminus, the 294-residue chain is 33 kDa chaperonin (294 aa).

Cystine bridges form between cysteine 239–cysteine 241 and cysteine 272–cysteine 275.

This sequence belongs to the HSP33 family. Post-translationally, under oxidizing conditions two disulfide bonds are formed involving the reactive cysteines. Under reducing conditions zinc is bound to the reactive cysteines and the protein is inactive.

The protein resides in the cytoplasm. Its function is as follows. Redox regulated molecular chaperone. Protects both thermally unfolding and oxidatively damaged proteins from irreversible aggregation. Plays an important role in the bacterial defense system toward oxidative stress. In Lacticaseibacillus casei (strain BL23) (Lactobacillus casei), this protein is 33 kDa chaperonin.